The following is a 205-amino-acid chain: LexA repressor (205 aa).

The segment at residues 29–49 is a DNA-binding region (H-T-H motif); it reads IRDICKATGLRSSSTVYNYLN. Active-site for autocatalytic cleavage activity residues include Ser128 and Lys165.

This sequence belongs to the peptidase S24 family. As to quaternary structure, homodimer.

The enzyme catalyses Hydrolysis of Ala-|-Gly bond in repressor LexA.. Functionally, represses a number of genes involved in the response to DNA damage (SOS response), including recA and lexA. In the presence of single-stranded DNA, RecA interacts with LexA causing an autocatalytic cleavage which disrupts the DNA-binding part of LexA, leading to derepression of the SOS regulon and eventually DNA repair. This is LexA repressor from Moorella thermoacetica (strain ATCC 39073 / JCM 9320).